The chain runs to 594 residues: UvrABC system protein C (594 aa).

The region spanning 13-99 is the GIY-YIG domain; the sequence is HSSGVYQYFD…IKQLKPKYNI (87 aa). The region spanning 205–240 is the UVR domain; that stretch reads DKLIKELELKMERLSNNLRFEEALIYRDRIAKIQKI.

It belongs to the UvrC family. In terms of assembly, interacts with UvrB in an incision complex.

It localises to the cytoplasm. Functionally, the UvrABC repair system catalyzes the recognition and processing of DNA lesions. UvrC both incises the 5' and 3' sides of the lesion. The N-terminal half is responsible for the 3' incision and the C-terminal half is responsible for the 5' incision. This chain is UvrABC system protein C, found in Helicobacter pylori (strain HPAG1).